The chain runs to 199 residues: Recombination protein RecR (199 aa).

Residues 58-73 form a C4-type zinc finger; it reads CSVCGNLTDTDVCPLC. The 96-residue stretch at 81 to 176 folds into the Toprim domain; it reads SVICVVEDPR…KTTRIAHGIP (96 aa).

This sequence belongs to the RecR family.

In terms of biological role, may play a role in DNA repair. It seems to be involved in an RecBC-independent recombinational process of DNA repair. It may act with RecF and RecO. The protein is Recombination protein RecR of Acetivibrio thermocellus (strain ATCC 27405 / DSM 1237 / JCM 9322 / NBRC 103400 / NCIMB 10682 / NRRL B-4536 / VPI 7372) (Clostridium thermocellum).